A 25-amino-acid chain; its full sequence is Flagellar filament core protein flaB3 (25 aa).

Belongs to the bacterial flagellin family. As to quaternary structure, the flagellum consists of an outer layer composed of two sheath proteins, flaA1 (44 kDa) and flaA2 (35 kDa) around a core that contains three proteins flaB1 (37 kDa), flaB2 (34 kDa) and flaB3 (32 kDa).

The protein resides in the periplasmic flagellum. It is found in the periplasm. Its function is as follows. Component of the core of the flagella. This chain is Flagellar filament core protein flaB3 (flaB3), found in Brachyspira hyodysenteriae (Treponema hyodysenteriae).